A 284-amino-acid chain; its full sequence is Bifunctional protein FolD (284 aa).

NADP(+) is bound by residues 164–166 (GRG), S189, and I230.

This sequence belongs to the tetrahydrofolate dehydrogenase/cyclohydrolase family. In terms of assembly, homodimer.

The enzyme catalyses (6R)-5,10-methylene-5,6,7,8-tetrahydrofolate + NADP(+) = (6R)-5,10-methenyltetrahydrofolate + NADPH. The catalysed reaction is (6R)-5,10-methenyltetrahydrofolate + H2O = (6R)-10-formyltetrahydrofolate + H(+). It participates in one-carbon metabolism; tetrahydrofolate interconversion. In terms of biological role, catalyzes the oxidation of 5,10-methylenetetrahydrofolate to 5,10-methenyltetrahydrofolate and then the hydrolysis of 5,10-methenyltetrahydrofolate to 10-formyltetrahydrofolate. The sequence is that of Bifunctional protein FolD from Desulforamulus reducens (strain ATCC BAA-1160 / DSM 100696 / MI-1) (Desulfotomaculum reducens).